A 655-amino-acid polypeptide reads, in one-letter code: p-hydroxybenzoic acid efflux pump subunit AaeB (655 aa).

11 helical membrane-spanning segments follow: residues 13–33 (FAVKLACAIVLALFIGFHFQL), 38–58 (WAVLTAAIVAAGPAFAAGGEP), 69–89 (LRIIGTFIGCIAALIIIISMI), 93–113 (LLMILVCCVWAGFCTWISSLV), 121–141 (WGLSGYTALIIVITIQTEPLL), 152–172 (EIVIGIGCAILADLLFSPRSI), 370–390 (LFWLWTGWTSGNGAMVMIAVV), 407–427 (FIYGTLAALPLGLLYFLVIIP), 431–451 (QSMLLLCLSLAVLGFFIGIEV), 459–479 (MGALASTINIIVLDNPMTFHF), and 482–502 (FLDSALGQIVGCMLAFIVILL).

Belongs to the aromatic acid exporter ArAE (TC 2.A.85) family.

The protein resides in the cell inner membrane. Forms an efflux pump with AaeA. Could function as a metabolic relief valve, allowing to eliminate certain compounds when they accumulate to high levels in the cell. This chain is p-hydroxybenzoic acid efflux pump subunit AaeB, found in Salmonella enteritidis PT4 (strain P125109).